The primary structure comprises 341 residues: S-adenosylmethionine:tRNA ribosyltransferase-isomerase (341 aa).

This sequence belongs to the QueA family. Monomer.

Its subcellular location is the cytoplasm. It carries out the reaction 7-aminomethyl-7-carbaguanosine(34) in tRNA + S-adenosyl-L-methionine = epoxyqueuosine(34) in tRNA + adenine + L-methionine + 2 H(+). It participates in tRNA modification; tRNA-queuosine biosynthesis. Functionally, transfers and isomerizes the ribose moiety from AdoMet to the 7-aminomethyl group of 7-deazaguanine (preQ1-tRNA) to give epoxyqueuosine (oQ-tRNA). This is S-adenosylmethionine:tRNA ribosyltransferase-isomerase from Clostridium tetani (strain Massachusetts / E88).